A 615-amino-acid polypeptide reads, in one-letter code: MGDWMTVTDPVLCTENKNLSQYTSETKMSPSSLYSQQVLCSSVPLSKNVHGVFGVFCTGENIEQSISYLDQELTTFGFPSLYEESKSKEAKRELNIVAVLNCMNELLVLQRKNLLAQESVETQNLKLGSDMDHLQSCYAKLKEQLETSRREMIGLQERDRQLQCKNRSLHQLLKNEKDEVQKLQNIIASRATQYNHDVKRKEREYNKLKERLHQLVMNKKDKNIAMDVLNYVGRADGKRGSWRTDKTEARNEDEMYKILLNDYEYRQKQILMENAELKKVLQQMKKEMISLLSPQKKKPRERAEDGTGTVAISDIEDDSGELSRDSVWGLSCDTVREQLTNSIRKQWRILKSHVEKLDNQASKVHSEGLNEEDVISRQDHEQETEKLELEIERCKEMIKAQQQLLQQQLATTCDDDTTSLLRDCYLLEEKERLKEEWTLFKEQKKNFERERRSFTEAAIRLGLERKAFEEERASWVKQQFLNMTNFDHQNSENVKLFSAFSGSSDPDNLIVHSRPRQKKLHSVANGVPACTSKLTKSLPASPSTSDFRQTHSCVSEHSSISVLNITPEESKPSEVARESTDQKWSVQSRPSSREGCYSGCSSAFRSAHGDRDDLP.

Coiled-coil stretches lie at residues 126 to 227 and 266 to 293; these read KLGS…IAMD and RQKQILMENAELKKVLQQMKKEMISLLS. Phosphoserine is present on residues Ser-290, Ser-293, Ser-313, and Ser-319. A disordered region spans residues 293 to 316; sequence SPQKKKPRERAEDGTGTVAISDIE. Positions 375-461 form a coiled coil; that stretch reads ISRQDHEQET…RSFTEAAIRL (87 aa). Residues Ser-537, Ser-541, and Ser-543 each carry the phosphoserine modification. A disordered region spans residues 567–615; it reads PEESKPSEVARESTDQKWSVQSRPSSREGCYSGCSSAFRSAHGDRDDLP. Residues 568–581 are compositionally biased toward basic and acidic residues; that stretch reads EESKPSEVARESTD.

This sequence belongs to the ADIP family. In terms of assembly, interacts with SSX2 and SSX3. Does not interact with SSX1 and SSX4. Interacts with afadin and alpha-actinin. Interacts with VAV2. Interacts with PCM1. Interacts with WRAP73. In terms of tissue distribution, widely expressed.

It is found in the cell junction. The protein localises to the adherens junction. It localises to the nucleus. Its subcellular location is the cytoplasm. The protein resides in the cytoskeleton. It is found in the microtubule organizing center. The protein localises to the centrosome. It localises to the centriolar satellite. Its subcellular location is the cilium basal body. Its function is as follows. Belongs to an adhesion system, which plays a role in the organization of homotypic, interneuronal and heterotypic cell-cell adherens junctions (AJs). May connect the nectin-afadin and E-cadherin-catenin system through alpha-actinin and may be involved in organization of the actin cytoskeleton at AJs through afadin and alpha-actinin. Acts as a centrosome maturation factor, probably by maintaining the integrity of the pericentriolar material and proper microtubule nucleation at mitotic spindle poles. The function seems to implicate at least in part WRAP73; the SSX2IP:WRAP73 complex is proposed to act as regulator of spindle anchoring at the mitotic centrosome. Involved in cell movement: localizes at the leading edge of moving cells in response to PDGF and is required for the formation of the leading edge and the promotion of cell movement, possibly via activation of Rac signaling. Involved in ciliogenesis. It is required for targeted recruitment of the BBSome, CEP290, RAB8, and SSTR3 to the cilia. This Mus musculus (Mouse) protein is Afadin- and alpha-actinin-binding protein (Ssx2ip).